Here is a 21-residue protein sequence, read N- to C-terminus: Helicopsin (21 aa).

This sequence belongs to the CRISP family. Post-translationally, contains 8 disulfide bonds. In terms of tissue distribution, expressed by the salivary gland.

The protein resides in the secreted. In terms of biological role, helicopsin exhibits robust neurotoxic activity as shown by immediate death (about 8 minutes) of mice due to respiratory paralysis. In Helicops angulatus (South American water snake), this protein is Helicopsin.